A 311-amino-acid polypeptide reads, in one-letter code: Methionyl-tRNA formyltransferase (311 aa).

109-112 (SLLP) serves as a coordination point for (6S)-5,6,7,8-tetrahydrofolate.

This sequence belongs to the Fmt family.

The enzyme catalyses L-methionyl-tRNA(fMet) + (6R)-10-formyltetrahydrofolate = N-formyl-L-methionyl-tRNA(fMet) + (6S)-5,6,7,8-tetrahydrofolate + H(+). Attaches a formyl group to the free amino group of methionyl-tRNA(fMet). The formyl group appears to play a dual role in the initiator identity of N-formylmethionyl-tRNA by promoting its recognition by IF2 and preventing the misappropriation of this tRNA by the elongation apparatus. The polypeptide is Methionyl-tRNA formyltransferase (Solibacter usitatus (strain Ellin6076)).